Here is a 532-residue protein sequence, read N- to C-terminus: Ankyrin repeat-containing protein At2g01680 (532 aa).

ANK repeat units lie at residues 9–38 (LTHQ…GDEL), 58–89 (AGET…TVKI), 93–122 (SDMN…ELCR), 127–156 (SNTS…SCAM), 161–190 (NGKT…AIVG), 195–224 (KGQT…TILN), and 229–259 (KGNT…EVNA). 4 helical membrane-spanning segments follow: residues 354–374 (ITVV…NLPG), 396–416 (VFCL…VVQI), 436–456 (LMWA…FAVV), and 467–487 (ITLL…YFVF).

Its subcellular location is the membrane. This is Ankyrin repeat-containing protein At2g01680 from Arabidopsis thaliana (Mouse-ear cress).